The sequence spans 314 residues: Olfactory receptor 5G3 (314 aa).

Residues 1-24 (MEDKNQTVVTEFLLLGLTDHPYQK) lie on the Extracellular side of the membrane. N-linked (GlcNAc...) asparagine glycosylation occurs at N5. A helical transmembrane segment spans residues 25–45 (IVLFFMFLFVYLITLGGNLGM). Residues 46-97 (ITLIWIDPRLHTPMYFFLRHLSFVDICSSSSVVPKMLCNIFAEKKDITFLGC) are Cytoplasmic-facing. A disulfide bridge connects residues C97 and C179. The chain crosses the membrane as a helical span at residues 98–118 (AAQMWFFGLFEAAECFLLAAM). Topologically, residues 119–143 (AYDRYVAICKPLLYTLIMSQQVCMQ) are extracellular. Residues 144–164 (LVVGPYAMALISTMTHTIFTF) form a helical membrane-spanning segment. Over 165 to 167 (CLP) the chain is Cytoplasmic. Residues 168-188 (FCGSNIINHFFCDIFPLLSLA) form a helical membrane-spanning segment. Residues 189 to 196 (CADTWVNK) are Extracellular-facing. The helical transmembrane segment at 197–217 (FVLFVLAGAIGVLSGLIIMVS) threads the bilayer. The Cytoplasmic segment spans residues 218–237 (YICILMTILKIQTADGKQKA). Residues 238–258 (FFTCFSHLAAVSILYGTLFLI) traverse the membrane as a helical segment. Residues 259–268 (YVRPSSSSSL) are Extracellular-facing. The helical transmembrane segment at 269–289 (GIYKVISLFYTVVIPMVNPLI) threads the bilayer. At 290–314 (YSLRNKEVKDAFRRKIERKKFIIGR) the chain is on the cytoplasmic side.

Belongs to the G-protein coupled receptor 1 family.

It localises to the cell membrane. Its function is as follows. Odorant receptor. This is Olfactory receptor 5G3 (OR5G3) from Homo sapiens (Human).